We begin with the raw amino-acid sequence, 349 residues long: 1-acylglycerol-3-phosphate O-acyltransferase ABHD5 (349 aa).

An N-acetylalanine modification is found at Ala2. One can recognise an AB hydrolase-1 domain in the interval 77–185 (PLVLLHGFGG…VEPWGFPERP (109 aa)). An HXXXXD motif motif is present at residues 327–332 (HYVYAD).

The protein belongs to the peptidase S33 family. ABHD4/ABHD5 subfamily. As to quaternary structure, interacts with ADRP, PLIN and PNPLA2. Interacts with PLIN5; promotes interaction with PNPLA2.

Its subcellular location is the cytoplasm. It localises to the lipid droplet. The catalysed reaction is a 1-acyl-sn-glycero-3-phosphate + an acyl-CoA = a 1,2-diacyl-sn-glycero-3-phosphate + CoA. It catalyses the reaction 1-(9Z-octadecenoyl)-sn-glycero-3-phosphate + (9Z)-octadecenoyl-CoA = 1,2-di-(9Z-octadecenoyl)-sn-glycero-3-phosphate + CoA. The enzyme catalyses 1-(9Z-octadecenoyl)-sn-glycero-3-phosphate + hexadecanoyl-CoA = 1-(9Z)-octadecenoyl-2-hexadecanoyl-sn-glycero-3-phosphate + CoA. It carries out the reaction 1-(9Z-octadecenoyl)-sn-glycero-3-phosphate + octadecanoyl-CoA = 1-(9Z-octadecenoyl)-2-octadecanoyl-sn-glycero-3-phosphate + CoA. The catalysed reaction is 1-(9Z-octadecenoyl)-sn-glycero-3-phosphate + (5Z,8Z,11Z,14Z)-eicosatetraenoyl-CoA = 1-(9Z)-octadecenoyl-2-(5Z,8Z,11Z,14Z)-eicosatetraenoyl-sn-glycero-3-phosphate + CoA. It catalyses the reaction eicosanoyl-CoA + 1-(9Z-octadecenoyl)-sn-glycero-3-phosphate = 1-(9Z)-octadecenoyl-2-eicosanoyl-sn-glycero-3-phosphate + CoA. The enzyme catalyses 1-hexadecanoyl-sn-glycero-3-phosphate + (9Z)-octadecenoyl-CoA = 1-hexadecanoyl-2-(9Z-octadecenoyl)-sn-glycero-3-phosphate + CoA. It carries out the reaction 1-octadecanoyl-sn-glycero-3-phosphate + (9Z)-octadecenoyl-CoA = 1-octadecanoyl-2-(9Z-octadecenoyl)-sn-glycero-3-phosphate + CoA. The catalysed reaction is 1-(5Z,8Z,11Z,14Z-eicosatetraenoyl)-sn-glycero-3-phosphate + (9Z)-octadecenoyl-CoA = 1-(5Z,8Z,11Z,14Z)-eicosatetraenoyl-2-(9Z)-octadecenoyl-sn-glycero-3-phosphate + CoA. Acyltransferase activity is inhibited by detergents such as Triton X-100 and 3-[(3-cholamidopropyl)dimethylammonio]-1-propanesulfonate (CHAPS). Acyltransferase activity is inhibited by the presence of magnesium and calcium. Functionally, coenzyme A-dependent lysophosphatidic acid acyltransferase that catalyzes the transfer of an acyl group on a lysophosphatidic acid. Functions preferentially with 1-oleoyl-lysophosphatidic acid followed by 1-palmitoyl-lysophosphatidic acid, 1-stearoyl-lysophosphatidic acid and 1-arachidonoyl-lysophosphatidic acid as lipid acceptor. Functions preferentially with arachidonoyl-CoA followed by oleoyl-CoA as acyl group donors. Functions in phosphatidic acid biosynthesis. May regulate the cellular storage of triacylglycerol through activation of the phospholipase PNPLA2. Involved in keratinocyte differentiation. Regulates lipid droplet fusion. This is 1-acylglycerol-3-phosphate O-acyltransferase ABHD5 from Sus scrofa (Pig).